We begin with the raw amino-acid sequence, 347 residues long: Spermidine/putrescine import ATP-binding protein PotA (347 aa).

The region spanning 6-238 is the ABC transporter domain; the sequence is LEIRNLSHYY…PKTKFVADFI (233 aa). 40–47 provides a ligand contact to ATP; the sequence is GPSGCGKT.

It belongs to the ABC transporter superfamily. Spermidine/putrescine importer (TC 3.A.1.11.1) family. In terms of assembly, the complex is composed of two ATP-binding proteins (PotA), two transmembrane proteins (PotB and PotC) and a solute-binding protein (PotD).

The protein resides in the cell inner membrane. It catalyses the reaction ATP + H2O + polyamine-[polyamine-binding protein]Side 1 = ADP + phosphate + polyamineSide 2 + [polyamine-binding protein]Side 1.. Functionally, part of the ABC transporter complex PotABCD involved in spermidine/putrescine import. Responsible for energy coupling to the transport system. In Borrelia garinii subsp. bavariensis (strain ATCC BAA-2496 / DSM 23469 / PBi) (Borreliella bavariensis), this protein is Spermidine/putrescine import ATP-binding protein PotA.